The primary structure comprises 61 residues: Small ribosomal subunit protein uS14 (61 aa).

C24, C27, C40, and C43 together coordinate Zn(2+).

The protein belongs to the universal ribosomal protein uS14 family. Zinc-binding uS14 subfamily. In terms of assembly, part of the 30S ribosomal subunit. Contacts proteins S3 and S10. The cofactor is Zn(2+).

Binds 16S rRNA, required for the assembly of 30S particles and may also be responsible for determining the conformation of the 16S rRNA at the A site. This chain is Small ribosomal subunit protein uS14, found in Caldicellulosiruptor bescii (strain ATCC BAA-1888 / DSM 6725 / KCTC 15123 / Z-1320) (Anaerocellum thermophilum).